Consider the following 244-residue polypeptide: Ubiquitin carboxyl-terminal hydrolase mug105 (244 aa).

Catalysis depends on C42, which acts as the Nucleophile. H165 acts as the Proton acceptor in catalysis. D183 is a catalytic residue.

This sequence belongs to the peptidase C78 family. ZUFSP subfamily.

It is found in the cytoplasm. The catalysed reaction is Thiol-dependent hydrolysis of ester, thioester, amide, peptide and isopeptide bonds formed by the C-terminal Gly of ubiquitin (a 76-residue protein attached to proteins as an intracellular targeting signal).. Its function is as follows. Deubiquitinase with endodeubiquitinase activity that preferentially cleaves 'Lys-48'-linked polyubiquitin chains. Shows only weak activity against 'Lys-63' and 'Lys-11'-linked chains. Has a role in meiosis. The protein is Ubiquitin carboxyl-terminal hydrolase mug105 (mug105) of Schizosaccharomyces pombe (strain 972 / ATCC 24843) (Fission yeast).